The chain runs to 576 residues: Zn(2)-C6 fungal-type transcription factor mpsE (576 aa).

Positions 15 to 46 (CDRCRSHKLKCPQQPSTATGACQRCTRAKAQC) form a DNA-binding region, zn(2)-C6 fungal-type. A compositionally biased stretch (polar residues) spans 47–61 (TFSPRSRAIKNTQDG). 3 disordered regions span residues 47 to 123 (TFSP…GTFD), 334 to 369 (VAHAGHPPPPHLSHHRHCQPSPPGSLPTPTSRSSTA), and 404 to 424 (HPAPSHSSARHRHSRSTLHRR). Residues 95-109 (PPQQQQSDQQKPSGS) show a composition bias toward low complexity.

The protein localises to the nucleus. Functionally, transcription factor; part of the gene cluster that mediates the biosynthesis of macrophasetins, 3-decalinoyltetramic acids (DTAs) which feature a tetramate (pyrrolidine-2,4-dione) unit connected to a decalin fragment and that have potent bioactivities. The chain is Zn(2)-C6 fungal-type transcription factor mpsE from Macrophomina phaseolina (strain MS6) (Charcoal rot fungus).